The chain runs to 329 residues: Ketol-acid reductoisomerase (NADP(+)) (329 aa).

In terms of domain architecture, KARI N-terminal Rossmann spans 2 to 181 (MKKYYESDAD…GATRAVVLET (180 aa)). NADP(+) is bound by residues 25–28 (YGSQ), arginine 48, serine 52, and 82–85 (DELQ). The active site involves histidine 107. Glycine 133 lines the NADP(+) pocket. The KARI C-terminal knotted domain occupies 182-327 (TFREETETDL…KEVRAMMPQF (146 aa)). Mg(2+) contacts are provided by aspartate 190, glutamate 194, glutamate 226, and glutamate 230. A substrate-binding site is contributed by serine 251.

The protein belongs to the ketol-acid reductoisomerase family. Mg(2+) serves as cofactor.

It catalyses the reaction (2R)-2,3-dihydroxy-3-methylbutanoate + NADP(+) = (2S)-2-acetolactate + NADPH + H(+). The catalysed reaction is (2R,3R)-2,3-dihydroxy-3-methylpentanoate + NADP(+) = (S)-2-ethyl-2-hydroxy-3-oxobutanoate + NADPH + H(+). It participates in amino-acid biosynthesis; L-isoleucine biosynthesis; L-isoleucine from 2-oxobutanoate: step 2/4. Its pathway is amino-acid biosynthesis; L-valine biosynthesis; L-valine from pyruvate: step 2/4. Functionally, involved in the biosynthesis of branched-chain amino acids (BCAA). Catalyzes an alkyl-migration followed by a ketol-acid reduction of (S)-2-acetolactate (S2AL) to yield (R)-2,3-dihydroxy-isovalerate. In the isomerase reaction, S2AL is rearranged via a Mg-dependent methyl migration to produce 3-hydroxy-3-methyl-2-ketobutyrate (HMKB). In the reductase reaction, this 2-ketoacid undergoes a metal-dependent reduction by NADPH to yield (R)-2,3-dihydroxy-isovalerate. In Methanoregula boonei (strain DSM 21154 / JCM 14090 / 6A8), this protein is Ketol-acid reductoisomerase (NADP(+)).